The primary structure comprises 268 residues: Ribosomal RNA small subunit methyltransferase A (268 aa).

6 residues coordinate S-adenosyl-L-methionine: N18, L20, G45, E66, D91, and N112.

This sequence belongs to the class I-like SAM-binding methyltransferase superfamily. rRNA adenine N(6)-methyltransferase family. RsmA subfamily.

It is found in the cytoplasm. The catalysed reaction is adenosine(1518)/adenosine(1519) in 16S rRNA + 4 S-adenosyl-L-methionine = N(6)-dimethyladenosine(1518)/N(6)-dimethyladenosine(1519) in 16S rRNA + 4 S-adenosyl-L-homocysteine + 4 H(+). Specifically dimethylates two adjacent adenosines (A1518 and A1519) in the loop of a conserved hairpin near the 3'-end of 16S rRNA in the 30S particle. May play a critical role in biogenesis of 30S subunits. The protein is Ribosomal RNA small subunit methyltransferase A of Shewanella putrefaciens (strain CN-32 / ATCC BAA-453).